The primary structure comprises 445 residues: Phosphatidate cytidylyltransferase 2 (445 aa).

The segment covering 1 to 39 (MTELRQRVAREPEAPPEDKESESEAKADGETASDSESRV) has biased composition (basic and acidic residues). The interval 1–52 (MTELRQRVAREPEAPPEDKESESEAKADGETASDSESRVEAVTQPPSADDTP) is disordered. Ser-21 carries the phosphoserine modification. Thr-31 is modified (phosphothreonine). Residues Ser-33, Ser-35, and Ser-37 each carry the phosphoserine modification. Phosphothreonine is present on Thr-51. 6 helical membrane passes run 79 to 99 (MIAFFFIIIYLGPMVLMMIVM), 132 to 152 (FLLCVNYFFYGETVTDYFFTL), 166 to 186 (HRFISFTLYLTGFCMFVLSLV), 213 to 233 (LVIHNLFEGMIWFIVPISCVI), 262 to 282 (GFIGGFFATVVFGLLLSYVMS), and 340 to 360 (IALSTFASLIGPFGGFFASGF).

The protein belongs to the CDS family. In terms of assembly, homodimer.

The protein localises to the endoplasmic reticulum membrane. The catalysed reaction is a 1,2-diacyl-sn-glycero-3-phosphate + CTP + H(+) = a CDP-1,2-diacyl-sn-glycerol + diphosphate. It catalyses the reaction 1-octadecanoyl-2-(5Z,8Z,11Z,14Z-eicosatetraenoyl)-sn-glycero-3-phosphate + CTP + H(+) = 1-octadecanoyl-2-(5Z,8Z,11Z,14Z-eicosatetraenoyl)-sn-glycero-3-cytidine-5'-diphosphate + diphosphate. It carries out the reaction 1-octadecanoyl-2-(9Z,12Z-octadecadienoyl)-sn-glycero-3-phosphate + CTP + H(+) = 1-octadecanoyl-2-(9Z,12Z-octadecadienoyl)-sn-glycero-3-cytidine-5'-diphosphate + diphosphate. The enzyme catalyses 1-hexadecanoyl-2-(5Z,8Z,11Z,14Z-eicosatetraenoyl)-sn-glycero-3-phosphate + CTP + H(+) = 1-hexadecanoyl-2-(5Z,8Z,11Z,14Z-eicosatetraenoyl)-sn-glycero-3-cytidine-5'-diphosphate + diphosphate. The catalysed reaction is 1,2-di-(5Z,8Z,11Z,14Z)-eicosatetraenoyl-sn-glycero-3-phosphate + CTP + H(+) = 1,2-di-(5Z,8Z,11Z,14Z-eicosatetraenoyl)-sn-glycero-3-cytidine-5'-diphosphate + diphosphate. It catalyses the reaction 1-octadecanoyl-2-(9Z-octadecenoyl)-sn-glycero-3-phosphate + CTP + H(+) = 1-octadecanoyl-2-(9Z-octadecenoyl)-sn-glycero-3-cytidine-5'-diphosphate + diphosphate. It carries out the reaction 1-octadecanoyl-2-(4Z,7Z,10Z,13Z,16Z,19Z-docosahexaenoyl)-sn-glycero-3-phosphate + CTP + H(+) = 1-octadecanoyl-2-(4Z,7Z,10Z,13Z,16Z,19Z-docosahexaenoyl)-sn-glycero-3-cytidine-5'-diphosphate + diphosphate. The enzyme catalyses 1,2-di-(9Z,12Z-octadecadienoyl)-sn-glycero-3-phosphate + CTP + H(+) = 1,2-di-(9Z,12Z-octadecadienoyl)-sn-glycero-3-cytidine-5'-diphosphate + diphosphate. The catalysed reaction is 1,2-di-(9Z-octadecenoyl)-sn-glycero-3-phosphate + CTP + H(+) = 1,2-di-(9Z-octadecenoyl)-sn-glycero-3-cytidine-5'-diphosphate + diphosphate. The protein operates within phospholipid metabolism; CDP-diacylglycerol biosynthesis; CDP-diacylglycerol from sn-glycerol 3-phosphate: step 3/3. Functionally, catalyzes the conversion of phosphatidic acid (PA) to CDP-diacylglycerol (CDP-DAG), an essential intermediate in the synthesis of phosphatidylglycerol, cardiolipin and phosphatidylinositol. Exhibits specificity for the nature of the acyl chains at the sn-1 and sn-2 positions in the substrate, PA and the preferred acyl chain composition is 1-stearoyl-2-arachidonoyl-sn-phosphatidic acid. Plays an important role in regulating the growth and maturation of lipid droplets which are storage organelles at the center of lipid and energy homeostasis. The sequence is that of Phosphatidate cytidylyltransferase 2 (CDS2) from Bos taurus (Bovine).